The following is a 450-amino-acid chain: Tubulin alpha chain (450 aa).

GTP is bound at residue glutamine 11. Position 40 is an N6-acetyllysine (lysine 40). The GTP site is built by glutamate 71, serine 140, glycine 144, threonine 145, threonine 179, asparagine 206, and asparagine 228. Mg(2+) is bound at residue glutamate 71. Glutamate 254 is a catalytic residue.

The protein belongs to the tubulin family. In terms of assembly, dimer of alpha and beta chains. A typical microtubule is a hollow water-filled tube with an outer diameter of 25 nm and an inner diameter of 15 nM. Alpha-beta heterodimers associate head-to-tail to form protofilaments running lengthwise along the microtubule wall with the beta-tubulin subunit facing the microtubule plus end conferring a structural polarity. Microtubules usually have 13 protofilaments but different protofilament numbers can be found in some organisms and specialized cells. Mg(2+) serves as cofactor. Acetylation of alpha chains at Lys-40 stabilizes microtubules and affects affinity and processivity of microtubule motors. This modification has a role in multiple cellular functions, ranging from cell motility, cell cycle progression or cell differentiation to intracellular trafficking and signaling.

It is found in the cytoplasm. The protein localises to the cytoskeleton. The enzyme catalyses GTP + H2O = GDP + phosphate + H(+). Functionally, tubulin is the major constituent of microtubules, a cylinder consisting of laterally associated linear protofilaments composed of alpha- and beta-tubulin heterodimers. Microtubules grow by the addition of GTP-tubulin dimers to the microtubule end, where a stabilizing cap forms. Below the cap, tubulin dimers are in GDP-bound state, owing to GTPase activity of alpha-tubulin. The chain is Tubulin alpha chain from Euplotes vannus (Marine ciliate).